A 119-amino-acid polypeptide reads, in one-letter code: uncharacterized protein (119 aa).

Residues 78 to 119 (SHRKSQQHQTQGNQVLRGTRKLESPTVGPRPGLRRQHTRNFL) are disordered. Residues 84–93 (QHQTQGNQVL) show a composition bias toward polar residues. Residues 109–119 (GLRRQHTRNFL) are compositionally biased toward basic residues.

This is an uncharacterized protein from Saccharomyces cerevisiae (strain ATCC 204508 / S288c) (Baker's yeast).